Reading from the N-terminus, the 462-residue chain is Fumarate hydratase class II (462 aa).

Residues 98–100 (SGT), Arg-126, 129–132 (HPND), 139–141 (SSN), and Thr-187 contribute to the substrate site. Residues 120 to 141 (GTRGKGRKVHPNDHVNKGQSSN) are disordered. His-188 functions as the Proton donor/acceptor in the catalytic mechanism. The active site involves Ser-318. Residues Ser-319 and 324–326 (KVN) contribute to the substrate site.

Belongs to the class-II fumarase/aspartase family. Fumarase subfamily. Homotetramer.

The protein localises to the cytoplasm. The catalysed reaction is (S)-malate = fumarate + H2O. The protein operates within carbohydrate metabolism; tricarboxylic acid cycle; (S)-malate from fumarate: step 1/1. Its function is as follows. Involved in the TCA cycle. Catalyzes the stereospecific interconversion of fumarate to L-malate. In Nitrosomonas europaea (strain ATCC 19718 / CIP 103999 / KCTC 2705 / NBRC 14298), this protein is Fumarate hydratase class II.